The following is a 180-amino-acid chain: Large ribosomal subunit protein uL6 (180 aa).

It belongs to the universal ribosomal protein uL6 family. Part of the 50S ribosomal subunit.

This protein binds to the 23S rRNA, and is important in its secondary structure. It is located near the subunit interface in the base of the L7/L12 stalk, and near the tRNA binding site of the peptidyltransferase center. In Borrelia turicatae (strain 91E135), this protein is Large ribosomal subunit protein uL6.